Here is a 517-residue protein sequence, read N- to C-terminus: Putative succinate-semialdehyde dehydrogenase [NADP(+)] (517 aa).

NADP(+) contacts are provided by residues 157–158, 181–184, and 232–233; these read WN, KPDS, and GS. Glutamate 254 (proton acceptor) is an active-site residue. Leucine 255 provides a ligand contact to NADP(+). Cysteine 288 functions as the Nucleophile in the catalytic mechanism. Glutamate 386 contributes to the NADP(+) binding site.

This sequence belongs to the aldehyde dehydrogenase family.

The enzyme catalyses succinate semialdehyde + NADP(+) + H2O = succinate + NADPH + 2 H(+). Catalyzes the NADP(+)-dependent oxidation of succinate semialdehyde to succinate. Although it has succinate semialdehyde dehydrogenase activity, is likely to act physiologically on a different aldehyde(s). The sequence is that of Putative succinate-semialdehyde dehydrogenase [NADP(+)] (gabD2) from Mycolicibacterium smegmatis (strain ATCC 700084 / mc(2)155) (Mycobacterium smegmatis).